The primary structure comprises 555 residues: Phosphomethylpyrimidine synthase (555 aa).

Substrate contacts are provided by residues Asn-191, Met-220, Tyr-249, His-285, 305–307, 346–349, and Glu-385; these read SRG and DGLR. His-389 contributes to the Zn(2+) binding site. Position 412 (Tyr-412) interacts with substrate. Zn(2+) is bound at residue His-453. 3 residues coordinate [4Fe-4S] cluster: Cys-533, Cys-536, and Cys-541.

The protein belongs to the ThiC family. In terms of assembly, homodimer. The cofactor is [4Fe-4S] cluster.

It catalyses the reaction 5-amino-1-(5-phospho-beta-D-ribosyl)imidazole + S-adenosyl-L-methionine = 4-amino-2-methyl-5-(phosphooxymethyl)pyrimidine + CO + 5'-deoxyadenosine + formate + L-methionine + 3 H(+). The protein operates within cofactor biosynthesis; thiamine diphosphate biosynthesis. Functionally, catalyzes the synthesis of the hydroxymethylpyrimidine phosphate (HMP-P) moiety of thiamine from aminoimidazole ribotide (AIR) in a radical S-adenosyl-L-methionine (SAM)-dependent reaction. This Ehrlichia ruminantium (strain Welgevonden) protein is Phosphomethylpyrimidine synthase.